The chain runs to 725 residues: A-type inclusion protein A25 (725 aa).

2 coiled-coil regions span residues 418 to 521 (GNSG…RNGK) and 547 to 719 (EIDK…NAET). A run of 4 repeats spans residues 609-635 (VRRE…RNQE), 636-663 (DTQE…SGGG), 664-687 (NLTE…ECRE), and 699-725 (ISDL…DATS). The 4 X approximate tandem repeats stretch occupies residues 609-718 (VRRELEEERR…CRRNNETNAE (110 aa)).

Belongs to the poxviridae A25 protein family. As to quaternary structure, interacts (via N-terminus) with protein A26.

The protein localises to the virion. Structural protein that forms a matrix surrounding the mature virion (MV) through interaction with protein A26. Presence of protein A25 in the virion structurally prevents direct virus-cell fusion mechanism. The sequence is that of A-type inclusion protein A25 from Vaccinia virus (strain Western Reserve) (VACV).